Reading from the N-terminus, the 338-residue chain is Ketol-acid reductoisomerase (NADP(+)) (338 aa).

A KARI N-terminal Rossmann domain is found at 1 to 181 (MKVYYDKDAD…GGGKAGIIET (181 aa)). NADP(+) is bound by residues 24–27 (YGSQ), Arg47, and Ser52. Residue His107 is part of the active site. Gly133 lines the NADP(+) pocket. Residues 182–327 (NFREETETDL…EKLRAMMPWI (146 aa)) form the KARI C-terminal knotted domain. Residues Asp190, Glu194, Glu226, and Glu230 each contribute to the Mg(2+) site. Ser251 is a substrate binding site.

Belongs to the ketol-acid reductoisomerase family. Mg(2+) is required as a cofactor.

The catalysed reaction is (2R)-2,3-dihydroxy-3-methylbutanoate + NADP(+) = (2S)-2-acetolactate + NADPH + H(+). The enzyme catalyses (2R,3R)-2,3-dihydroxy-3-methylpentanoate + NADP(+) = (S)-2-ethyl-2-hydroxy-3-oxobutanoate + NADPH + H(+). The protein operates within amino-acid biosynthesis; L-isoleucine biosynthesis; L-isoleucine from 2-oxobutanoate: step 2/4. It functions in the pathway amino-acid biosynthesis; L-valine biosynthesis; L-valine from pyruvate: step 2/4. Involved in the biosynthesis of branched-chain amino acids (BCAA). Catalyzes an alkyl-migration followed by a ketol-acid reduction of (S)-2-acetolactate (S2AL) to yield (R)-2,3-dihydroxy-isovalerate. In the isomerase reaction, S2AL is rearranged via a Mg-dependent methyl migration to produce 3-hydroxy-3-methyl-2-ketobutyrate (HMKB). In the reductase reaction, this 2-ketoacid undergoes a metal-dependent reduction by NADPH to yield (R)-2,3-dihydroxy-isovalerate. This is Ketol-acid reductoisomerase (NADP(+)) from Methylibium petroleiphilum (strain ATCC BAA-1232 / LMG 22953 / PM1).